Reading from the N-terminus, the 39-residue chain is SPbeta prophage-derived membrane protein YosA (39 aa).

The helical transmembrane segment at 19 to 39 (SFVLIVVLFILLIIVGATFLY) threads the bilayer.

Belongs to the SscA family.

The protein localises to the membrane. The protein is SPbeta prophage-derived membrane protein YosA (yosA) of Bacillus subtilis (strain 168).